Reading from the N-terminus, the 362-residue chain is E3 ubiquitin-protein ligase TM129 (362 aa).

The Lumenal segment spans residues 1–6 (MDSPEV). A helical transmembrane segment spans residues 7–27 (TFTLAYLVFAVCFVFTPNEFY). Topologically, residues 28–56 (SAGLTVQNLLSGWLGSEDAAFVPYHLRRT) are cytoplasmic. Residues 57–77 (SATLLCHSLLPLGYYMGMCFA) form a helical membrane-spanning segment. The Lumenal segment spans residues 78 to 94 (ASEKQLYSPGQAPEAWQ). Residues 95-115 (LFLLLAVTLPLLSCTLIYYWS) traverse the membrane as a helical segment. Residues 116 to 362 (WDRWTRHPLA…FCILDVCCVR (247 aa)) lie on the Cytoplasmic side of the membrane. An RING-type; degenerate zinc finger spans residues 285-350 (CIGCMQTRAS…ASRVPCPTCR (66 aa)).

This sequence belongs to the TMEM129 family. In terms of assembly, integral component of ER-resident dislocation complexes.

It is found in the endoplasmic reticulum membrane. The catalysed reaction is S-ubiquitinyl-[E2 ubiquitin-conjugating enzyme]-L-cysteine + [acceptor protein]-L-lysine = [E2 ubiquitin-conjugating enzyme]-L-cysteine + N(6)-ubiquitinyl-[acceptor protein]-L-lysine.. It participates in protein modification; protein ubiquitination. In terms of biological role, E3 ubiquitin-protein ligase involved in ER-associated protein degradation, preferentially associates with the E2 enzyme UBE2J2. Exploited by viral US11 proteins to mediate HLA class I proteins degradation. The protein is E3 ubiquitin-protein ligase TM129 (Tmem129) of Mus musculus (Mouse).